The following is a 256-amino-acid chain: Thiazole synthase (256 aa).

K96 functions as the Schiff-base intermediate with DXP in the catalytic mechanism. 1-deoxy-D-xylulose 5-phosphate contacts are provided by residues G157, 183-184 (AG), and 205-206 (NT).

Belongs to the ThiG family. In terms of assembly, homotetramer. Forms heterodimers with either ThiH or ThiS.

It is found in the cytoplasm. The enzyme catalyses [ThiS sulfur-carrier protein]-C-terminal-Gly-aminoethanethioate + 2-iminoacetate + 1-deoxy-D-xylulose 5-phosphate = [ThiS sulfur-carrier protein]-C-terminal Gly-Gly + 2-[(2R,5Z)-2-carboxy-4-methylthiazol-5(2H)-ylidene]ethyl phosphate + 2 H2O + H(+). The protein operates within cofactor biosynthesis; thiamine diphosphate biosynthesis. Its function is as follows. Catalyzes the rearrangement of 1-deoxy-D-xylulose 5-phosphate (DXP) to produce the thiazole phosphate moiety of thiamine. Sulfur is provided by the thiocarboxylate moiety of the carrier protein ThiS. In vitro, sulfur can be provided by H(2)S. This chain is Thiazole synthase, found in Bacillus cereus (strain 03BB102).